The following is a 610-amino-acid chain: 1,8-cineol synthase, chloroplastic (610 aa).

A chloroplast-targeting transit peptide spans 1-51 (MNHHLIITPIFHLQIMLPVATLKRPPPPAATCSIYSFSRGTPSLVSKARLS). The (2E)-geranyl diphosphate site is built by arginine 322, aspartate 359, aspartate 363, arginine 500, and asparagine 503. Mg(2+)-binding residues include aspartate 359 and aspartate 363. The DDXXD motif motif lies at 359 to 363 (DDVYD). Mg(2+)-binding residues include asparagine 503, threonine 507, and glutamate 511.

This sequence belongs to the terpene synthase family. Tpsb subfamily. As to quaternary structure, monomer. Requires Mg(2+) as cofactor. Mn(2+) is required as a cofactor. As to expression, confined to buds and flowers.

The protein localises to the plastid. It localises to the chloroplast. The catalysed reaction is (2E)-geranyl diphosphate + H2O = 1,8-cineole + diphosphate. It catalyses the reaction (2E)-geranyl diphosphate = limonene + diphosphate. The enzyme catalyses (2E)-geranyl diphosphate = sabinene + diphosphate. It carries out the reaction (2E)-geranyl diphosphate = (E)-beta-ocimene + diphosphate. The catalysed reaction is (2E)-geranyl diphosphate = beta-myrcene + diphosphate. It catalyses the reaction (2E)-geranyl diphosphate = alpha-pinene + diphosphate. The enzyme catalyses (2E)-geranyl diphosphate + H2O = (S)-alpha-terpineol + diphosphate. The protein operates within secondary metabolite biosynthesis; terpenoid biosynthesis. Functionally, monoterpene synthase involved in the biosynthesis of monoterpene natural products of the 'cineole cassette', volatile compounds present in floral scent. Catalyzes the conversion of (2E)-geranyl diphosphate (GPP) into 1,8-cineole and, as minor products, limonene, sabinene, (E)-beta-ocimene, beta-myrcene, alpha-pinene and alpha-terpineol. This Nicotiana suaveolens (Australian tobacco) protein is 1,8-cineol synthase, chloroplastic.